The chain runs to 110 residues: Carboxysome shell protein CsoS1B (110 aa).

The BMC domain occupies 8–93; sequence ALGMIETRGL…VHSEVEIILP (86 aa).

Belongs to the bacterial microcompartments protein family. CsoS1 subfamily. Homohexamer with a small central pore. Interacts with the N-terminus (residues 1-136) of RuBisCO (CbbL).

It is found in the carboxysome. Functionally, one of shell proteins of the carboxysome, a polyhedral inclusion where RuBisCO (ribulose bisphosphate carboxylase, ccbL-ccbS) is sequestered. Assembles into hexamers which make sheets that form the facets of the polyhedral carboxysome. The shell probably limits the diffusion of CO(2) into and out of the carboxysome. There are estimated to be 540 CsoS1B proteins per carboxysome. In terms of biological role, unlike beta-carboxysomes, alpha-carboxysomes (Cb) can form without cargo protein. CsoS2 is essential for Cb formation and is also capable of targeting foreign proteins to the Cb. The Cb shell assembles with the aid of CsoS2; CsoS1A, CsoS1B and CsoS1C form the majority of the shell while CsoS4A and CsoS4B form vertices. CsoS1D forms pseudohexamers that probably control metabolite flux into and out of the shell. This Halothiobacillus neapolitanus (strain ATCC 23641 / c2) (Thiobacillus neapolitanus) protein is Carboxysome shell protein CsoS1B.